The following is a 294-amino-acid chain: Formate dehydrogenase, nitrate-inducible, iron-sulfur subunit (294 aa).

Residues 1–256 (MAMETQDIIK…DTSVSLWKGA (256 aa)) are Periplasmic-facing. 4Fe-4S ferredoxin-type domains lie at 30-58 (VAKLIDVSTCIGCKACQVACSEWNDIRDE), 91-123 (LEWLIRKDGCMHCEDPGCLKACPSAGAIIQYAN), 124-153 (GIVDFQSENCIGCGYCIAGCPFNIPRLNKE), and 158-189 (YKCTLCVDRVSVGQEPACVKTCPTGAIHFGTK). Residues Cys-39, Cys-42, Cys-45, Cys-49, Cys-100, Cys-103, Cys-108, Cys-112, Cys-133, Cys-136, Cys-139, Cys-143, Cys-160, Cys-163, Cys-175, and Cys-179 each contribute to the [4Fe-4S] cluster site. The helical transmembrane segment at 257–279 (LKPLAAAGFIATFAGLIFHYIGI) threads the bilayer. The Cytoplasmic portion of the chain corresponds to 280 to 294 (GPNKEVDDDEEDHHE).

In terms of assembly, trimer of heterotrimers, consisting of subunits alpha, beta and gamma. Requires [4Fe-4S] cluster as cofactor.

Its subcellular location is the cell inner membrane. In terms of biological role, formate dehydrogenase allows E.coli to use formate as major electron donor during anaerobic respiration, when nitrate is used as electron acceptor. The beta subunit FdnH is an electron transfer unit containing 4 iron-sulfur clusters; it serves as a conduit for electrons that are transferred from the formate oxidation site in the alpha subunit (FdnG) to the menaquinone associated with the gamma subunit (FdnI) of formate dehydrogenase-N. Formate dehydrogenase-N is part of a system that generates proton motive force, together with the dissimilatory nitrate reductase (Nar). This Escherichia coli (strain K12) protein is Formate dehydrogenase, nitrate-inducible, iron-sulfur subunit (fdnH).